The chain runs to 934 residues: Intimin (934 aa).

The N-terminal stretch at 1–39 (MITHGCYTRTRHKHKLKKTLIMLSAGLGLFFYVNQNSFA) is a signal peptide. Residues 40–153 (NGENYFKLGS…KLTKMSPDVT (114 aa)) are peptidoglycan-binding. Residues 40-153 (NGENYFKLGS…KLTKMSPDVT (114 aa)) are sufficient for homodimerization. Residues 40 to 212 (NGENYFKLGS…LQAWLQHYGT (173 aa)) form a required for periplasmic localization region. Residues 63 to 112 (LFYTLKTGETVADLSKSQDINLSTIWSLNKHLYSSESEMMKAAPGQQIIL) form the LysM domain. The inverse autotransporter stretch occupies residues 210–411 (YGTAEVNLQS…LYSMQFRYQF (202 aa)). The signature sequence for beta-barrel assembly machinery (BAM), which recognizes the unfolded beta-barrel in the periplasm stretch occupies residues 402-411 (LYSMQFRYQF). The minimum linker residues necessary for formation of a heat-modifiable beta-barrel stretch occupies residues 437 to 449 (LVQRNNNIILEYK). Big-1 domains follow at residues 560-653 (VTDF…VIFF) and 660-753 (ITEI…VTFF). The tract at residues 747–934 (ATEVTFFDEL…TPNVYAVCVE (188 aa)) is intimin receptor Tir-binding. Positions 787 to 833 (ASGGDGTYSWYSENTSIATVDASGKVTLNGKGSVVIKATSGDKQTVS) constitute a BIG2 domain. The cysteines at positions 858 and 932 are disulfide-linked.

The protein belongs to the intimin/invasin family. Homodimer. Interacts with Tir.

The protein localises to the cell outer membrane. An inverse autotransporter. Adhesin, which mediates attachment to the human intestine epithelial cells. Necessary for the production of attaching and effacing lesions on infected human tissue culture cells. Anchored to the outer membrane by binding to peptidoglycan (PGN) via its periplasmic domain, thus helping in receptor interactions during host invasion. PGN-binding may also aid in resisting mechanical and chemical stress during transit of the bacterium through the gastrointestinal tract of the host. In Escherichia coli O157:H7, this protein is Intimin.